The following is a 71-amino-acid chain: UPF0337 protein PPA1427 (71 aa).

The tract at residues 20–46 is disordered; the sequence is EKIGGLTDDSDLKSAGADQKASGKVAQ.

The protein belongs to the UPF0337 (CsbD) family.

The sequence is that of UPF0337 protein PPA1427 from Cutibacterium acnes (strain DSM 16379 / KPA171202) (Propionibacterium acnes).